The following is a 51-amino-acid chain: Structural protein ORF5a (51 aa).

Residues 11–28 traverse the membrane as a helical segment; that stretch reads RGLLLAIAFFVVYRAVLF.

This sequence belongs to the arteriviridae ORF5a protein family. As to quaternary structure, interacts with GP2b and GP4.

It localises to the virion. The protein resides in the host cell membrane. Functionally, minor virion component that plays an essential role in virus infectivity. In Porcine reproductive and respiratory syndrome virus (strain VR-2332) (PRRSV), this protein is Structural protein ORF5a.